The sequence spans 254 residues: Dihydroanticapsin 7-dehydrogenase (254 aa).

Leu-9–Asn-31 is an NAD(+) binding site. Ser-139 serves as a coordination point for substrate. Tyr-152 functions as the Proton acceptor in the catalytic mechanism.

This sequence belongs to the short-chain dehydrogenases/reductases (SDR) family.

It carries out the reaction L-dihydroanticapsin + NAD(+) = L-anticapsin + NADH + H(+). It participates in antibiotic biosynthesis; bacilysin biosynthesis. Part of the bacABCDEFG operon responsible for the biosynthesis of bacilysin, an irreversible inactivator of the glutaminase domain of glucosamine synthetase. Catalyzes the dehydrogenation of the C7-hydroxyl group in the 4S-tetrahydrotyrosine (4S-H4Tyr) to yield anticapsin (epoxycyclohexanonyl-Ala). This Bacillus amyloliquefaciens (Bacillus velezensis) protein is Dihydroanticapsin 7-dehydrogenase.